The following is a 90-amino-acid chain: Co-chaperonin GroES (90 aa).

It belongs to the GroES chaperonin family. As to quaternary structure, heptamer of 7 subunits arranged in a ring. Interacts with the chaperonin GroEL.

The protein resides in the cytoplasm. Together with the chaperonin GroEL, plays an essential role in assisting protein folding. The GroEL-GroES system forms a nano-cage that allows encapsulation of the non-native substrate proteins and provides a physical environment optimized to promote and accelerate protein folding. GroES binds to the apical surface of the GroEL ring, thereby capping the opening of the GroEL channel. This is Co-chaperonin GroES from Bacteroides thetaiotaomicron (strain ATCC 29148 / DSM 2079 / JCM 5827 / CCUG 10774 / NCTC 10582 / VPI-5482 / E50).